The primary structure comprises 250 residues: UPF0259 membrane protein bbp_256 (250 aa).

6 helical membrane passes run 21–41 (PIIV…DSII), 86–106 (FSLL…IQMT), 125–145 (FFKL…GFLL), 146–166 (YFIP…ILLI), 188–208 (IIVP…LIIS), and 216–236 (FLAY…LIIY).

This sequence belongs to the UPF0259 family.

It localises to the cell membrane. This Buchnera aphidicola subsp. Baizongia pistaciae (strain Bp) protein is UPF0259 membrane protein bbp_256.